The chain runs to 461 residues: Homocitrate synthase (461 aa).

The 256-residue stretch at Val4–Gln259 folds into the Pyruvate carboxyltransferase domain. Arg12 contacts 2-oxoglutarate. Glu13 contacts Mg(2+). Residues His76, Arg136, and Thr170 each contribute to the 2-oxoglutarate site. Residues His198 and His200 each contribute to the Mg(2+) site. His292 functions as the Proton acceptor in the catalytic mechanism.

The protein belongs to the alpha-IPM synthase/homocitrate synthase family. Homocitrate synthase LYS20/LYS21 subfamily. Requires Mg(2+) as cofactor. Mn(2+) is required as a cofactor.

It carries out the reaction acetyl-CoA + 2-oxoglutarate + H2O = (2R)-homocitrate + CoA + H(+). Its pathway is amino-acid biosynthesis; L-lysine biosynthesis via AAA pathway; L-alpha-aminoadipate from 2-oxoglutarate: step 1/5. Functionally, catalyzes the aldol-type condensation of 2-oxoglutarate with acetyl-CoA to yield homocitrate. Carries out the first step of the alpha-aminoadipate (AAA) lysine biosynthesis pathway. This Saccharolobus islandicus (strain L.S.2.15 / Lassen #1) (Sulfolobus islandicus) protein is Homocitrate synthase.